Reading from the N-terminus, the 225-residue chain is Phosphoribosylformylglycinamidine synthase subunit PurQ (225 aa).

A Glutamine amidotransferase type-1 domain is found at 4-225; that stretch reads RVGVITFPGT…YSVLDSVISA (222 aa). C87 (nucleophile) is an active-site residue. Residues H196 and E198 contribute to the active site.

As to quaternary structure, part of the FGAM synthase complex composed of 1 PurL, 1 PurQ and 2 PurS subunits.

The protein resides in the cytoplasm. It carries out the reaction N(2)-formyl-N(1)-(5-phospho-beta-D-ribosyl)glycinamide + L-glutamine + ATP + H2O = 2-formamido-N(1)-(5-O-phospho-beta-D-ribosyl)acetamidine + L-glutamate + ADP + phosphate + H(+). The enzyme catalyses L-glutamine + H2O = L-glutamate + NH4(+). It functions in the pathway purine metabolism; IMP biosynthesis via de novo pathway; 5-amino-1-(5-phospho-D-ribosyl)imidazole from N(2)-formyl-N(1)-(5-phospho-D-ribosyl)glycinamide: step 1/2. Its function is as follows. Part of the phosphoribosylformylglycinamidine synthase complex involved in the purines biosynthetic pathway. Catalyzes the ATP-dependent conversion of formylglycinamide ribonucleotide (FGAR) and glutamine to yield formylglycinamidine ribonucleotide (FGAM) and glutamate. The FGAM synthase complex is composed of three subunits. PurQ produces an ammonia molecule by converting glutamine to glutamate. PurL transfers the ammonia molecule to FGAR to form FGAM in an ATP-dependent manner. PurS interacts with PurQ and PurL and is thought to assist in the transfer of the ammonia molecule from PurQ to PurL. The protein is Phosphoribosylformylglycinamidine synthase subunit PurQ of Rhodococcus jostii (strain RHA1).